We begin with the raw amino-acid sequence, 368 residues long: 3-dehydroquinate synthase (368 aa).

NAD(+)-binding positions include 110–114 (GVIGD), 134–135 (TS), lysine 147, and lysine 156. Positions 189, 254, and 271 each coordinate Zn(2+).

This sequence belongs to the sugar phosphate cyclases superfamily. Dehydroquinate synthase family. NAD(+) is required as a cofactor. The cofactor is Co(2+). It depends on Zn(2+) as a cofactor.

The protein localises to the cytoplasm. It catalyses the reaction 7-phospho-2-dehydro-3-deoxy-D-arabino-heptonate = 3-dehydroquinate + phosphate. It functions in the pathway metabolic intermediate biosynthesis; chorismate biosynthesis; chorismate from D-erythrose 4-phosphate and phosphoenolpyruvate: step 2/7. In terms of biological role, catalyzes the conversion of 3-deoxy-D-arabino-heptulosonate 7-phosphate (DAHP) to dehydroquinate (DHQ). The sequence is that of 3-dehydroquinate synthase from Thermosynechococcus vestitus (strain NIES-2133 / IAM M-273 / BP-1).